The following is a 199-amino-acid chain: MTTLGVTGGIGSGKTTVCGFLEEKGARVFYADLEAKRLMQENADVRAAIVEAFGAAAYHEDDTLNREYLAEQVFGEAGRVERLNGIVHPHVFDAFEAAKERAADEGVSLLVHEAALLFEAGGDEHVDITAAVVAPEADRIAWVTARDDVSSGQVRARMQHQLSQEELRERADHVLENDGTLNDLRRKSAELYWAVTGGQ.

The DPCK domain occupies 3–199 (TLGVTGGIGS…ELYWAVTGGQ (197 aa)). 11–16 (GSGKTT) lines the ATP pocket.

This sequence belongs to the CoaE family.

It localises to the cytoplasm. The enzyme catalyses 3'-dephospho-CoA + ATP = ADP + CoA + H(+). The protein operates within cofactor biosynthesis; coenzyme A biosynthesis; CoA from (R)-pantothenate: step 5/5. Functionally, catalyzes the phosphorylation of the 3'-hydroxyl group of dephosphocoenzyme A to form coenzyme A. The chain is Dephospho-CoA kinase from Salinibacter ruber (strain DSM 13855 / M31).